The following is a 173-amino-acid chain: Invasion protein B homolog BruAb1_0366 (173 aa).

The signal sequence occupies residues 1-23; the sequence is MKNYRAIGLAFTFTALSSLSAFA.

This sequence belongs to the IalB family.

The chain is Invasion protein B homolog BruAb1_0366 from Brucella abortus biovar 1 (strain 9-941).